The sequence spans 206 residues: TPR repeat-containing protein YrrB (206 aa).

TPR repeat units follow at residues 1-23 (MQEGDYEKAAEAFTKAIEENKED), 24-57 (AIPYINFANLLSSVNELERALAFYDKALELDSSA), 59-91 (TAYYGAGNVYVVKEMYKEAKDMFEKALRAGMEN), 93-125 (DLFYMLGTVLVKLEQPKLALPYLQRAVELNEND), 127-159 (EARFQFGMCLANEGMLDEALSQFAAVTEQDPGH), and 160-193 (ADAFYNAGVTYAYKENREKALEMLDKAIDIQPDH).

Monomer.

In terms of biological role, could be an interacting mediator in the complex formation among RNA sulfuration components, RNA processing components, and aminoacyl-tRNA synthetases. The sequence is that of TPR repeat-containing protein YrrB (yrrB) from Bacillus subtilis (strain 168).